The chain runs to 102 residues: Monothiol glutaredoxin-S4 (102 aa).

The Glutaredoxin domain occupies 1 to 101; the sequence is MDKLQKMISE…PMLKRVGALW (101 aa). Residue cysteine 21 coordinates [2Fe-2S] cluster. Residues 99-102 carry the Responsive for interaction with TGA factors motif; the sequence is ALWL.

This sequence belongs to the glutaredoxin family. CC-type subfamily.

It is found in the cytoplasm. The protein localises to the nucleus. Functionally, may only reduce GSH-thiol disulfides, but not protein disulfides. In Arabidopsis thaliana (Mouse-ear cress), this protein is Monothiol glutaredoxin-S4 (GRXS4).